Consider the following 302-residue polypeptide: MDQKRLTHLRQLEAESIHIIREVAAEFSNPVMMYSIGKDSSVMLHLARKAFYPGTLPFPLLHVDTGWKFREMYEFRDRTAKAYGCELLVHKNPEGVAMGINPFVHGSAKHTDIMKTEGLKQALNKYGFDAAFGGARRDEEKSRAKERIYSFRDRFHRWDPKNQRPELWHNYNGQINKGESIRVFPLSNWTELDIWQYIYLENIEIVPLYLAAERPVLERDGMLMMIDDDRIDLQPGEVIEKRMVRFRTLGCWPLTGAVESEAQTLPEIIEEMLVSTTSERQGRVIDRDQAGSMELKKRQGYF.

Belongs to the PAPS reductase family. CysD subfamily. As to quaternary structure, heterodimer composed of CysD, the smaller subunit, and CysN.

The enzyme catalyses sulfate + ATP + H(+) = adenosine 5'-phosphosulfate + diphosphate. Its pathway is sulfur metabolism; hydrogen sulfide biosynthesis; sulfite from sulfate: step 1/3. Its function is as follows. With CysN forms the ATP sulfurylase (ATPS) that catalyzes the adenylation of sulfate producing adenosine 5'-phosphosulfate (APS) and diphosphate, the first enzymatic step in sulfur assimilation pathway. APS synthesis involves the formation of a high-energy phosphoric-sulfuric acid anhydride bond driven by GTP hydrolysis by CysN coupled to ATP hydrolysis by CysD. The polypeptide is Sulfate adenylyltransferase subunit 2 (Klebsiella pneumoniae (strain 342)).